A 38-amino-acid polypeptide reads, in one-letter code: Histatin-1 (38 aa).

The disordered stretch occupies residues 1-38 (DSHEERHHGRHGHHKYGRKFHEKHHSHRGYRSNYLYDN). A Phosphoserine modification is found at Ser-2. The segment covering 8 to 30 (HGRHGHHKYGRKFHEKHHSHRGY) has biased composition (basic residues).

Belongs to the histatin/statherin family.

It is found in the secreted. Functionally, histatins (Hsts) are cationic and histidine-rich secreted peptides mainly synthesized by saliva glands of humans and higher primates. Hsts are considered to be major precursors of the protective proteinaceous structure on tooth surfaces (enamel pellicle). This Macaca fascicularis (Crab-eating macaque) protein is Histatin-1 (HTN1).